A 266-amino-acid polypeptide reads, in one-letter code: Energy-coupling factor transporter transmembrane protein EcfT (266 aa).

7 consecutive transmembrane segments (helical) span residues 26 to 46 (VIAT…RSVT), 47 to 67 (LAGL…HYIL), 69 to 89 (GIKP…LSTP), 116 to 136 (LIWL…IALT), 151 to 171 (LPVH…PTLI), 192 to 212 (SLVA…LSAF), and 246 to 266 (YAVT…KKAL).

The protein belongs to the energy-coupling factor EcfT family. In terms of assembly, forms a stable energy-coupling factor (ECF) transporter complex composed of 2 membrane-embedded substrate-binding proteins (S component), 2 ATP-binding proteins (A component) and 2 transmembrane proteins (T component). May be able to interact with more than 1 S component at a time.

Its subcellular location is the cell membrane. In terms of biological role, transmembrane (T) component of an energy-coupling factor (ECF) ABC-transporter complex. Unlike classic ABC transporters this ECF transporter provides the energy necessary to transport a number of different substrates. This is Energy-coupling factor transporter transmembrane protein EcfT from Heliobacterium modesticaldum (strain ATCC 51547 / Ice1).